Reading from the N-terminus, the 116-residue chain is Omega-ctenitoxin-Pn3a (116 aa).

Residues 1-19 (MKMKLLGIILLVSFPFVLG) form the signal peptide. The propeptide occupies 20–38 (FAGIPIEEGENSVEVGEVE). 7 disulfides stabilise this stretch: C41/C58, C48/C64, C55/C90, C57/C78, C66/C76, C96/C102, and C106/C111. Residue H115 is modified to Histidine amide.

Belongs to the neurotoxin 04 (omega-agtx) family. 03 (type II/III omega-agtx) subfamily. Expressed by the venom gland.

The protein localises to the secreted. This toxin is a potent and practically irreversible antagonist of both Cav2.1/CACNA1A and Cav2.2/CACNA1B calcium channels, while it displays a partial and rapidly reversible block of Cav2.3/CACNA1E calcium channels and no effect on Cav3/CACNA1 calcium channels. Inhibits glutamate uptake from rat brain synaptosomes by an interaction between cysteines from both glutamate transporter and toxin. Blocks potassium-induced exocytosis of synaptic vesicles in brain cortical synaptosomes (IC(50)=1.1 nM). In rat brain, inhibits glutamate release, neuronal death and loss of neurotransmission in the hippocampus resulting from ischemia. In vivo, induces rapid general flaccid paralysis followed by death in 10-30 minutes at dose levels of 5 ug per mouse. In Phoneutria nigriventer (Brazilian armed spider), this protein is Omega-ctenitoxin-Pn3a.